The sequence spans 418 residues: Tyrosine--tRNA ligase (418 aa).

Position 34 (Tyr34) interacts with L-tyrosine. Residues 39-48 (PTADSLHLGH) carry the 'HIGH' region motif. The L-tyrosine site is built by Tyr169 and Gln173. Residues 229–233 (KFGKS) carry the 'KMSKS' region motif. Lys232 serves as a coordination point for ATP. Residues 352–418 (LNIVDLLVTA…GKKKYFVLTY (67 aa)) enclose the S4 RNA-binding domain.

It belongs to the class-I aminoacyl-tRNA synthetase family. TyrS type 1 subfamily. Homodimer.

Its subcellular location is the cytoplasm. The catalysed reaction is tRNA(Tyr) + L-tyrosine + ATP = L-tyrosyl-tRNA(Tyr) + AMP + diphosphate + H(+). In terms of biological role, catalyzes the attachment of tyrosine to tRNA(Tyr) in a two-step reaction: tyrosine is first activated by ATP to form Tyr-AMP and then transferred to the acceptor end of tRNA(Tyr). This is Tyrosine--tRNA ligase from Streptococcus gordonii (strain Challis / ATCC 35105 / BCRC 15272 / CH1 / DL1 / V288).